Reading from the N-terminus, the 457-residue chain is Bifunctional protein GlmU (457 aa).

The interval Met-1–Arg-230 is pyrophosphorylase. UDP-N-acetyl-alpha-D-glucosamine is bound by residues Leu-9–Gly-12, Lys-23, Gln-73, and Gly-78–Thr-79. Asp-103 is a Mg(2+) binding site. Gly-140, Glu-155, Asn-170, and Asn-228 together coordinate UDP-N-acetyl-alpha-D-glucosamine. Asn-228 is a Mg(2+) binding site. The linker stretch occupies residues Ile-231–Asn-251. Residues Gly-252–Lys-457 form an N-acetyltransferase region. The UDP-N-acetyl-alpha-D-glucosamine site is built by Arg-333 and Lys-351. His-363 (proton acceptor) is an active-site residue. UDP-N-acetyl-alpha-D-glucosamine contacts are provided by Tyr-366 and Asn-377. Acetyl-CoA-binding positions include Asn-386 to Tyr-387, Ala-423, and Arg-440.

This sequence in the N-terminal section; belongs to the N-acetylglucosamine-1-phosphate uridyltransferase family. It in the C-terminal section; belongs to the transferase hexapeptide repeat family. In terms of assembly, homotrimer. The cofactor is Mg(2+).

Its subcellular location is the cytoplasm. It catalyses the reaction alpha-D-glucosamine 1-phosphate + acetyl-CoA = N-acetyl-alpha-D-glucosamine 1-phosphate + CoA + H(+). The catalysed reaction is N-acetyl-alpha-D-glucosamine 1-phosphate + UTP + H(+) = UDP-N-acetyl-alpha-D-glucosamine + diphosphate. It participates in nucleotide-sugar biosynthesis; UDP-N-acetyl-alpha-D-glucosamine biosynthesis; N-acetyl-alpha-D-glucosamine 1-phosphate from alpha-D-glucosamine 6-phosphate (route II): step 2/2. The protein operates within nucleotide-sugar biosynthesis; UDP-N-acetyl-alpha-D-glucosamine biosynthesis; UDP-N-acetyl-alpha-D-glucosamine from N-acetyl-alpha-D-glucosamine 1-phosphate: step 1/1. Its pathway is bacterial outer membrane biogenesis; LPS lipid A biosynthesis. Its function is as follows. Catalyzes the last two sequential reactions in the de novo biosynthetic pathway for UDP-N-acetylglucosamine (UDP-GlcNAc). The C-terminal domain catalyzes the transfer of acetyl group from acetyl coenzyme A to glucosamine-1-phosphate (GlcN-1-P) to produce N-acetylglucosamine-1-phosphate (GlcNAc-1-P), which is converted into UDP-GlcNAc by the transfer of uridine 5-monophosphate (from uridine 5-triphosphate), a reaction catalyzed by the N-terminal domain. This Listeria monocytogenes serovar 1/2a (strain ATCC BAA-679 / EGD-e) protein is Bifunctional protein GlmU.